We begin with the raw amino-acid sequence, 343 residues long: Proto-oncogene serine/threonine-protein kinase mos (343 aa).

One can recognise a Protein kinase domain in the interval 63–339; it reads VCLMHRLGSG…LLQRDLKAFR (277 aa). Residues 69-77 and Lys90 each bind ATP; that span reads LGSGGFGSV. The Proton acceptor role is filled by Asp198.

Belongs to the protein kinase superfamily. Ser/Thr protein kinase family. In terms of assembly, interacts with MAP2K1/MEK1.

It localises to the cytoplasm. It carries out the reaction L-seryl-[protein] + ATP = O-phospho-L-seryl-[protein] + ADP + H(+). It catalyses the reaction L-threonyl-[protein] + ATP = O-phospho-L-threonyl-[protein] + ADP + H(+). Its function is as follows. Serine/threonine kinase involved in the regulation of MAPK signaling. Is an activator of the ERK1/2 signaling cascade playing an essential role in the stimulation of oocyte maturation. In Mus musculus (Mouse), this protein is Proto-oncogene serine/threonine-protein kinase mos.